A 63-amino-acid polypeptide reads, in one-letter code: Large ribosomal subunit protein bL35 (63 aa).

The protein belongs to the bacterial ribosomal protein bL35 family.

In Campylobacter hominis (strain ATCC BAA-381 / DSM 21671 / CCUG 45161 / LMG 19568 / NCTC 13146 / CH001A), this protein is Large ribosomal subunit protein bL35.